A 226-amino-acid polypeptide reads, in one-letter code: Exosome complex component Rrp4 (226 aa).

One can recognise an S1 motif domain in the interval 61–135; the sequence is NDLVIGKVNS…RDPLVSISDR (75 aa). The region spanning 141–200 is the KH domain; that stretch reads DSGVLMEISPSKVPRLIGKKGSMIQMIEEATDAAVTIGQNGWVVVSCESPEGLLKAKKAI.

Belongs to the RRP4 family. In terms of assembly, component of the archaeal exosome complex. Forms a trimer of Rrp4 and/or Csl4 subunits. The trimer associates with a hexameric ring-like arrangement composed of 3 Rrp41-Rrp42 heterodimers.

The protein localises to the cytoplasm. Non-catalytic component of the exosome, which is a complex involved in RNA degradation. Increases the RNA binding and the efficiency of RNA degradation. Confers strong poly(A) specificity to the exosome. The chain is Exosome complex component Rrp4 from Nitrosopumilus maritimus (strain SCM1).